A 128-amino-acid chain; its full sequence is Holin-like protein CidA (128 aa).

The next 3 membrane-spanning stretches (helical) occupy residues 23 to 43, 58 to 78, and 84 to 104; these read LIVE…IVIF, IGAL…AVGI, and ILAE…FVVM.

Belongs to the CidA/LrgA family. CidA subfamily.

Its subcellular location is the cell membrane. In terms of biological role, increases the activity of extracellular murein hydrolases possibly by mediating their export via hole formation. Inhibited by the antiholin-like proteins LrgAB. In an unstressed cell, the LrgAB products probably inhibit the function of the CidA protein. When a cell is stressed by the addition of antibiotics or by other factors in the environment, CidA possibly oligomerizes within the bacterial cell membrane, creating lesions that disrupt the proton motive force, which in turn results in loss of cell viability. These lesions are also hypothesized to regulate the subsequent cell lysis by either allowing the murein hydrolases access to the cell wall substrate and/or regulating their activity by a possible change in the cell wall pH that results from loss of membrane potential. In Bacillus licheniformis (strain ATCC 14580 / DSM 13 / JCM 2505 / CCUG 7422 / NBRC 12200 / NCIMB 9375 / NCTC 10341 / NRRL NRS-1264 / Gibson 46), this protein is Holin-like protein CidA.